Here is a 2055-residue protein sequence, read N- to C-terminus: Dedicator of cytokinesis protein 9 (2055 aa).

Residues Ser-178 and Ser-181 each carry the phosphoserine modification. Residues 185–292 (GITKHGWLYK…WVTVLNKILQ (108 aa)) enclose the PH domain. The tract at residues 301-326 (EKRNGDPHEDDEQSKLEGSGSGLDSY) is disordered. Ser-444 and Ser-453 each carry phosphoserine. Positions 649 to 827 (SNHLYVYPKY…PLLKISTHLV (179 aa)) constitute a C2 DOCK-type domain. Phosphoserine is present on residues Ser-936 and Ser-1244. Thr-1250 is modified (phosphothreonine). A disordered region spans residues 1253-1291 (INSVRNADSRGSLISTDSGNSLPDRNPEKSNSLDKQQQS). Phosphoserine is present on residues Ser-1264, Ser-1270, and Ser-1273. The segment covering 1264 to 1276 (SLISTDSGNSLPD) has biased composition (polar residues). Residues 1614–2055 (KSYASTPELR…LSDIMREQMG (442 aa)) enclose the DOCKER domain. The interval 1679–2055 (DEEASMMEDV…LSDIMREQMG (377 aa)) is interaction with CDC42.

The protein belongs to the DOCK family. As to quaternary structure, homodimer. Interacts preferentially with nucleotide-depleted CDC42. As to expression, expressed in lung. Also detected in Peyers patches, thymus, brain and lymph nodes. Expressed in Purkinje cells.

The protein resides in the endomembrane system. Guanine nucleotide-exchange factor (GEF) that activates CDC42 by exchanging bound GDP for free GTP. Overexpression induces filopodia formation. This is Dedicator of cytokinesis protein 9 from Mus musculus (Mouse).